The sequence spans 56 residues: Large ribosomal subunit protein eL24 (56 aa).

The Zn(2+) site is built by Cys-6, Cys-9, Cys-32, and Cys-36. The C4-type zinc-finger motif lies at 6–36; that stretch reads CSFCNTRITPGTGKLYAKKDGTVYYFCSSKC.

Belongs to the eukaryotic ribosomal protein eL24 family. Part of the 50S ribosomal subunit. Forms a cluster with proteins L3 and L14. The cofactor is Zn(2+).

Functionally, binds to the 23S rRNA. The sequence is that of Large ribosomal subunit protein eL24 from Methanothrix thermoacetophila (strain DSM 6194 / JCM 14653 / NBRC 101360 / PT) (Methanosaeta thermophila).